A 119-amino-acid polypeptide reads, in one-letter code: Large ribosomal subunit protein bL20 (119 aa).

This sequence belongs to the bacterial ribosomal protein bL20 family.

In terms of biological role, binds directly to 23S ribosomal RNA and is necessary for the in vitro assembly process of the 50S ribosomal subunit. It is not involved in the protein synthesizing functions of that subunit. This Geobacillus kaustophilus (strain HTA426) protein is Large ribosomal subunit protein bL20.